The primary structure comprises 529 residues: Peptide chain release factor 3 (529 aa).

A tr-type G domain is found at 11 to 280 (AKRRTFAIIS…GLVEWAPAPM (270 aa)). GTP is bound by residues 20–27 (SHPDAGKT), 88–92 (DTPGH), and 142–145 (NKLD).

Belongs to the TRAFAC class translation factor GTPase superfamily. Classic translation factor GTPase family. PrfC subfamily.

The protein localises to the cytoplasm. Increases the formation of ribosomal termination complexes and stimulates activities of RF-1 and RF-2. It binds guanine nucleotides and has strong preference for UGA stop codons. It may interact directly with the ribosome. The stimulation of RF-1 and RF-2 is significantly reduced by GTP and GDP, but not by GMP. This is Peptide chain release factor 3 from Shigella flexneri.